Consider the following 86-residue polypeptide: Sec-independent protein translocase protein TatA (86 aa).

The chain crosses the membrane as a helical span at residues 3-23 (IFGVGLPEVTVILILALLIFG). Positions 56 to 86 (MNEEDESPKSIESNQTNEINQEKIDSENSKK) are disordered. A compositionally biased stretch (polar residues) spans 65–74 (SIESNQTNEI). The segment covering 75–86 (NQEKIDSENSKK) has biased composition (basic and acidic residues).

The protein belongs to the TatA/E family. In terms of assembly, forms a complex with TatC.

Its subcellular location is the cell inner membrane. Its function is as follows. Part of the twin-arginine translocation (Tat) system that transports large folded proteins containing a characteristic twin-arginine motif in their signal peptide across membranes. TatA could form the protein-conducting channel of the Tat system. This Prochlorococcus marinus (strain MIT 9215) protein is Sec-independent protein translocase protein TatA.